We begin with the raw amino-acid sequence, 152 residues long: Transcriptional repressor NrdR (152 aa).

Residues 3-33 (CSICKKGETSVVDSRPTEDGTAIRRRRLCVC) fold into a zinc finger. The 91-residue stretch at 48-138 (IMVVKKNGRK…VYRNFREEKD (91 aa)) folds into the ATP-cone domain.

This sequence belongs to the NrdR family. Requires Zn(2+) as cofactor.

Its function is as follows. Negatively regulates transcription of bacterial ribonucleotide reductase nrd genes and operons by binding to NrdR-boxes. In Pelagibacter ubique (strain HTCC1062), this protein is Transcriptional repressor NrdR.